The chain runs to 206 residues: Large ribosomal subunit protein uL4 (206 aa).

A disordered region spans residues 47–79; that stretch reads GTKGQKNRSAVRGGGAKPWAQKGSGRARAGTSR. Residues 69 to 79 show a composition bias toward low complexity; it reads GSGRARAGTSR.

It belongs to the universal ribosomal protein uL4 family. In terms of assembly, part of the 50S ribosomal subunit.

Its function is as follows. One of the primary rRNA binding proteins, this protein initially binds near the 5'-end of the 23S rRNA. It is important during the early stages of 50S assembly. It makes multiple contacts with different domains of the 23S rRNA in the assembled 50S subunit and ribosome. In terms of biological role, forms part of the polypeptide exit tunnel. The chain is Large ribosomal subunit protein uL4 from Hydrogenovibrio crunogenus (strain DSM 25203 / XCL-2) (Thiomicrospira crunogena).